Here is a 414-residue protein sequence, read N- to C-terminus: Voltage-gated ClC-type chloride channel ClcB (414 aa).

11 helical membrane passes run 5–25, 54–74, 116–136, 147–167, 169–189, 220–240, 255–275, 292–312, 327–347, 353–373, and 381–401; these read LVISIMLGMVSALIVWLFHQA, ALTPALGGLAAGLLLWAYQRY, SAIGREGAMVLLAALFASVFA, LWVACGAAAGMASAYHAPLAG, LFIAEILFGTLMLASLGPVVI, VQYFLMALLGLMAGFSGPLFL, LLPPLQLALGGIIVGLLSLIF, TPPGVLLIGGILICKLLAVLA, LFVGAALGMLCGQIFSLWPVL, LLMALTGMATLLAATTHAPIM, and MTGEYTLLPGLLLSCVIATTI.

The protein belongs to the chloride channel (TC 2.A.49) family. ClcB subfamily.

It localises to the cell inner membrane. In terms of biological role, probably acts as an electrical shunt for an outwardly-directed proton pump that is linked to amino acid decarboxylation, as part of the extreme acid resistance (XAR) response. The polypeptide is Voltage-gated ClC-type chloride channel ClcB (Yersinia pseudotuberculosis serotype O:1b (strain IP 31758)).